The sequence spans 150 residues: FAD synthase (150 aa).

Residues 11-12, 16-19, Asp-96, and Tyr-124 each bind ATP; these read TF and HPGH.

It belongs to the archaeal FAD synthase family. Homodimer. A divalent metal cation serves as cofactor.

It catalyses the reaction FMN + ATP + H(+) = FAD + diphosphate. Its pathway is cofactor biosynthesis; FAD biosynthesis; FAD from FMN: step 1/1. Its function is as follows. Catalyzes the transfer of the AMP portion of ATP to flavin mononucleotide (FMN) to produce flavin adenine dinucleotide (FAD) coenzyme. The polypeptide is FAD synthase (Methanocaldococcus fervens (strain DSM 4213 / JCM 15782 / AG86) (Methanococcus fervens)).